The chain runs to 236 residues: 2,3,4,5-tetrahydropyridine-2,6-dicarboxylate N-acetyltransferase (236 aa).

This sequence belongs to the transferase hexapeptide repeat family. DapH subfamily.

It catalyses the reaction (S)-2,3,4,5-tetrahydrodipicolinate + acetyl-CoA + H2O = L-2-acetamido-6-oxoheptanedioate + CoA. Its pathway is amino-acid biosynthesis; L-lysine biosynthesis via DAP pathway; LL-2,6-diaminopimelate from (S)-tetrahydrodipicolinate (acetylase route): step 1/3. Functionally, catalyzes the transfer of an acetyl group from acetyl-CoA to tetrahydrodipicolinate. The chain is 2,3,4,5-tetrahydropyridine-2,6-dicarboxylate N-acetyltransferase from Clostridium perfringens (strain ATCC 13124 / DSM 756 / JCM 1290 / NCIMB 6125 / NCTC 8237 / Type A).